A 311-amino-acid polypeptide reads, in one-letter code: Taste receptor type 2 member 9 (311 aa).

The Extracellular portion of the chain corresponds to 1-9; the sequence is MPSTIEAIY. The helical transmembrane segment at 10-32 threads the bilayer; it reads IILIAGELTIGIWGNGFIVLVNC. Topologically, residues 33–52 are cytoplasmic; that stretch reads IDWLKRRDVSLIDIILISLA. Residues 53–72 traverse the membrane as a helical segment; that stretch reads ISRICLLCVISLDGFFILLF. The Extracellular portion of the chain corresponds to 73-86; the sequence is PGTYDTNVLESIMD. Residues 87 to 109 traverse the membrane as a helical segment; it reads AVWTFANNSSLWFTSCLSIFYLL. Residues 110-128 lie on the Cytoplasmic side of the membrane; sequence KIANISHPFFFWLKLKINK. Residues 129–146 form a helical membrane-spanning segment; sequence VILAILLGSFLISLIISF. The Extracellular portion of the chain corresponds to 147–179; the sequence is PINGMWYNLFKVSHEENITWAFKVSTIPGAFKQ. N-linked (GlcNAc...) asparagine glycosylation is present at Asn163. A helical membrane pass occupies residues 180-202; that stretch reads LTLNLGAMVPFILCLISFFLLLF. The Cytoplasmic portion of the chain corresponds to 203 to 233; sequence SLVRHTKQIQLHATGFRDPSTEAHMRAVKAV. Residues 234-256 form a helical membrane-spanning segment; it reads IIFLLLLILYYPVFLVMTSSTLI. The Extracellular segment spans residues 257–260; sequence PQGK. The helical transmembrane segment at 261 to 283 threads the bilayer; that stretch reads LVLMIGDIVTVIFPSSHSFILIM. The Cytoplasmic portion of the chain corresponds to 284 to 311; that stretch reads GNSKLRAAFLKMLRFVKGFLRRRKPFVP.

It belongs to the G-protein coupled receptor T2R family.

It localises to the membrane. Gustducin-coupled receptor implicated in the perception of bitter compounds in the oral cavity and the gastrointestinal tract. Signals through PLCB2 and the calcium-regulated cation channel TRPM5. In Macaca mulatta (Rhesus macaque), this protein is Taste receptor type 2 member 9 (TAS2R9).